The sequence spans 223 residues: uncharacterized protein (223 aa).

In terms of domain architecture, HTH tetR-type spans 11–71 (EATFESFIDA…YLLEKRQMKK (61 aa)). The H-T-H motif DNA-binding region spans 34 to 53 (SVEDISRAAGYSKGAFYVHF).

This is an uncharacterized protein from Bacillus subtilis (strain 168).